The following is a 462-amino-acid chain: Putative zinc metalloprotease RSc1411 (462 aa).

A helical transmembrane segment spans residues 1–21 (MLTVLAFVFAIAVLIVVHELG). Zn(2+) is bound at residue histidine 18. The active site involves glutamate 19. Histidine 22 contributes to the Zn(2+) binding site. The helical transmembrane segment at 102 to 124 (FAIVAAGPVFNFLLAIALYALLA) threads the bilayer. A PDZ domain is found at 201–283 (TVRLRELPSA…MPEQNASIDI (83 aa)). The next 2 helical transmembrane spans lie at 386-406 (FVAFLALISVSLGVLNLLPVP) and 430-450 (WQAVLQKIGIACILLLTSLAL).

This sequence belongs to the peptidase M50B family. Requires Zn(2+) as cofactor.

Its subcellular location is the cell inner membrane. The chain is Putative zinc metalloprotease RSc1411 from Ralstonia nicotianae (strain ATCC BAA-1114 / GMI1000) (Ralstonia solanacearum).